A 369-amino-acid chain; its full sequence is Putative transport protein YueF (369 aa).

Helical transmembrane passes span Ile13 to Phe33, Ile34 to Phe54, Leu73 to Ile93, Ala159 to Phe179, Asp213 to Cys233, Phe234 to Ile254, Val271 to Ile291, and Ile316 to Val336.

It belongs to the autoinducer-2 exporter (AI-2E) (TC 2.A.86) family.

It is found in the cell membrane. This chain is Putative transport protein YueF (yueF), found in Bacillus subtilis (strain 168).